A 707-amino-acid polypeptide reads, in one-letter code: DCC-interacting protein 13-alpha (707 aa).

The tract at residues M1–G428 is required for RAB5A binding. One can recognise a BAR domain in the interval G3–P268. A coiled-coil region spans residues Q234–A257. Residues L277 to K375 form the PH domain. Disordered regions lie at residues A397–E433, G466–S490, and E636–A707. The residue at position 399 (T399) is a Phosphothreonine. At S401 the chain carries Phosphoserine. A F&amp;H motif is present at residues S403–G414. S410 carries the post-translational modification Phosphoserine; by PKA. The PID domain occupies S495–Q655. The stretch at L620–A670 forms a coiled coil. Residues E636–S666 are compositionally biased toward basic and acidic residues. Residues G679 to S691 are compositionally biased toward low complexity. 2 positions are modified to phosphoserine: S691 and S694. A compositionally biased stretch (basic and acidic residues) spans E698–A707.

Homodimer. Binds RAB5A/Rab5 through an N-terminal domain. This interaction is essential for its recruitment to endosomal membranes as well as its role in cell proliferation. Binds DCC and the catalytic domain of the inactive form of AKT2 through its PID domain. Binds PIK3CA and subunits of the NuRD/MeCP1 complex. Interacts with OCRL and INPP5B. Interacts with NTRK2. Interacts with APPL2; interaction is independent of follicle stimulating hormone stimulation; interaction is decreased by adiponectin in a time-dependent manner. Forms a complex with APPL2 and RUVBL2. Forms a complex comprising APPL2, RUVBL2, CTNNB1, HDAC1 and HDAC2; interaction reduces interaction between CTNNB1, HDAC1, HDAC2 and RUVBL2 leading to the decrease of deacetylase activity of this complex; affects the recruitment of repressive complexes to the Wnt target genes. Interacts with ANXA2. Interacts with TGFBR1; interaction is TGF beta dependent; mediates trafficking of the TGFBR1 from the endosomes to the nucleus via microtubules in a TRAF6-dependent manner. Interacts with PRKCZ. Interacts with PIK3R1 and APPL2. Interacts with ADIPOR1; ADIPOQ enhances this interaction; inhibites adiponectin-stimulated binding of APPL2 to ADIPOR1. Post-translationally, phosphorylation at Ser-410 by PKA severely impairs binding to OCRL. As to expression, expressed in insulin-target tissues including skeletal muscle, liver, fat, and brain.

The protein localises to the early endosome membrane. It localises to the nucleus. It is found in the cytoplasm. The protein resides in the endosome. Its subcellular location is the cell projection. The protein localises to the ruffle. It localises to the cytoplasmic vesicle. It is found in the phagosome. Multifunctional adapter protein that binds to various membrane receptors, nuclear factors and signaling proteins to regulate many processes, such as cell proliferation, immune response, endosomal trafficking and cell metabolism. Regulates signaling pathway leading to cell proliferation through interaction with RAB5A and subunits of the NuRD/MeCP1 complex. Functions as a positive regulator of innate immune response via activation of AKT1 signaling pathway by forming a complex with APPL1 and PIK3R1. Inhibits Fc-gamma receptor-mediated phagocytosis through PI3K/Akt signaling in macrophages. Regulates TLR4 signaling in activated macrophages. Involved in trafficking of the TGFBR1 from the endosomes to the nucleus via microtubules in a TRAF6-dependent manner. Plays a role in cell metabolism by regulating adiponecting and insulin signaling pathways. Required for fibroblast migration through HGF cell signaling. Positive regulator of beta-catenin/TCF-dependent transcription through direct interaction with RUVBL2/reptin resulting in the relief of RUVBL2-mediated repression of beta-catenin/TCF target genes by modulating the interactions within the beta-catenin-reptin-HDAC complex. This chain is DCC-interacting protein 13-alpha, found in Mus musculus (Mouse).